A 763-amino-acid polypeptide reads, in one-letter code: Phosphoglycerol transferase I (763 aa).

4 consecutive transmembrane segments (helical) span residues 1–21 (MSEL…AWKA), 26–46 (WWFA…ITLF), 77–97 (ILPG…LGWI), and 108–128 (FGYS…SPAF).

This sequence belongs to the OpgB family.

Its subcellular location is the cell inner membrane. It catalyses the reaction a phosphatidylglycerol + a membrane-derived-oligosaccharide D-glucose = a 1,2-diacyl-sn-glycerol + a membrane-derived-oligosaccharide 6-(glycerophospho)-D-glucose.. It participates in glycan metabolism; osmoregulated periplasmic glucan (OPG) biosynthesis. Transfers a phosphoglycerol residue from phosphatidylglycerol to the membrane-bound nascent glucan backbones. The protein is Phosphoglycerol transferase I of Escherichia coli O127:H6 (strain E2348/69 / EPEC).